Here is a 514-residue protein sequence, read N- to C-terminus: Myocyte-specific enhancer factor 2D (514 aa).

The 55-residue stretch at 3-57 (RKKIQIQRITDERNRQVTFTKRKFGLMKKAYELSVLCDCEIALIIFNHSNKLFQY) folds into the MADS-box domain. A DNA-binding region (mef2-type) is located at residues 58–86 (ASTDMDKVLLKYTEYNEPHESRTNADIIE). Phosphoserine occurs at positions 97, 98, and 106. A Phosphothreonine modification is found at L107. S110 carries the post-translational modification Phosphoserine. S121 is modified (phosphoserine; by PKA). The interval 174 to 207 (TDPRLLSPQQPALQRNSVSPGLPQRPASAGAMLG) is disordered. At S180 the chain carries Phosphoserine; by MAPK7. Positions 180-192 (SPQQPALQRNSVS) are enriched in polar residues. S190 is subject to Phosphoserine; by PKA. S231 is modified (phosphoserine). The interval 244–269 (NKVIPAKSPPPPTHNTQLGAPSRKPD) is disordered. N6-acetyllysine is present on K245. At S251 the chain carries Phosphoserine. Positions 286–292 (TEDHLDL) are beta domain. Disordered stretches follow at residues 364 to 399 (WQQP…QQPH) and 430 to 514 (SIKS…WTLK). Residues 367-396 (PQPPQQPQPPQPPQSQPQPPQPQPQQPPQQ) show a composition bias toward pro residues. Position 432 is an N6-acetyllysine; alternate (K432). Residue K432 forms a Glycyl lysine isopeptide (Lys-Gly) (interchain with G-Cter in SUMO); alternate linkage. At S437 the chain carries Phosphoserine.

Belongs to the MEF2 family. As to quaternary structure, forms a complex with class II HDACs in undifferentiating cells. On myogenic differentiation, HDACs are released into the cytoplasm allowing MEF2s to interact with other proteins for activation. Interacts with HDAC4 (in undifferentiating cells); the interaction translocates MEF2D to nuclear dots. Forms a heterodimer with MEF2A. Interacts with MAPK7; the interaction phosphorylates but does not activate MEF2D. Interacts with MYOG. Interacts with CCAR2 and HDAC3. Phosphorylated on Ser-437 is which is required for Lys-432 sumoylation and inhibits transcriptional activity. Phosphorylation on this residue by CDK5 is dependent on p35 and calpains. Phosphorylated by PKA at Ser-121 and Ser-190 represses transcriptional activity in embryonic and postnatal skeletal muscle, and stabilizes protein levels. No in vitro phosphorylation by PKA on Thr-20. Phosphorylated and activated by CaMK4. In terms of processing, acetylated on Lys-432 by CREBBP. Acetylated by EP300. Deacetylated by SIRT1 and HDAC3. Post-translationally, sumoylated on Lys-432 with SUMO2 but not SUMO1; which inhibits transcriptional activity and myogenic activity. Desumoylated by SENP3. Proteolytically cleaved in cerebellar granule neurons by caspase 7 following neurotoxicity. Preferentially cleaves the CDK5-mediated hyperphosphorylated form which leads to neuron apoptosis and transcriptional inactivation. In terms of tissue distribution, widely expressed though mainly restricted to skeletal and cardiac muscle, brain, neurons and lymphocytes. Differentially expressed depending on if isoforms contain the beta domain or not, with the total expression of the beta domain-lacking isoforms vastly exceeding that of the beta domain-containing isoforms. Isoforms containing the beta domain are expressed primarily in skeletal and cardiac muscle and in brain. Also present in lung and testis. Splicing to include the beta domain is induced in differentiating myocytes. Isoforms lacking the beta domain are expressed less abundantly in skeletal muscle, brain and lymphocytes, and are uniquely found in ovary, liver, spleen and kidney. In embryos, the beta domain-containing and beta domain-lacking isoforms are equally expressed. Also expressed cerebellar granule neurons and other regions of the CNS. Highest levels in the olfactory bulb, cortex, hippocampus, thalamus and cerebellum.

It is found in the nucleus. In terms of biological role, transcriptional activator which binds specifically to the MEF2 element, 5'-YTA[AT](4)TAR-3', found in numerous muscle-specific, growth factor- and stress-induced genes. Mediates cellular functions not only in skeletal and cardiac muscle development, but also in neuronal differentiation and survival. Plays diverse roles in the control of cell growth, survival and apoptosis via p38 MAPK signaling in muscle-specific and/or growth factor-related transcription. Plays a critical role in the regulation of neuronal apoptosis. This chain is Myocyte-specific enhancer factor 2D (Mef2d), found in Mus musculus (Mouse).